A 527-amino-acid chain; its full sequence is Ribonuclease Y 2 (527 aa).

Residues 2–22 (IAMIATAIIGIVAGGGLGWAL) form a helical membrane-spanning segment. The HD domain occupies 339-432 (QYFHCGEVGW…VIAADAVSGA (94 aa)).

Belongs to the RNase Y family.

Its subcellular location is the cell membrane. Endoribonuclease that initiates mRNA decay. The chain is Ribonuclease Y 2 from Bdellovibrio bacteriovorus (strain ATCC 15356 / DSM 50701 / NCIMB 9529 / HD100).